The primary structure comprises 389 residues: UDP-D-apiose/UDP-D-xylose synthase 2 (389 aa).

Residues F28, I29, D49, N76, I77, and L96 each coordinate NAD(+). The UDP-alpha-D-glucuronate site is built by Y105, T139, E141, R182, and Y185. NAD(+)-binding residues include Y185 and K189. Y185 functions as the Proton acceptor in the catalytic mechanism. Residue N214 participates in UDP-alpha-D-glucuronate binding. NAD(+) contacts are provided by W215 and R235. Residues K251, V253, R260, Y331, Y335, D337, and R341 each contribute to the UDP-alpha-D-glucuronate site.

It belongs to the NAD(P)-dependent epimerase/dehydratase family. Homodimer and heterodimer with AXS1. NAD(+) serves as cofactor. In terms of tissue distribution, widely expressed with stronger expression in dark-grown seedlings, leaves and stems, and lower levels in flowers, siliques, pistils, pollen and roots.

Its subcellular location is the cytoplasm. The enzyme catalyses UDP-alpha-D-glucuronate + H(+) = UDP-alpha-D-xylose + CO2. It catalyses the reaction UDP-alpha-D-glucuronate + H(+) = UDP-alpha-D-apiose + CO2. Its function is as follows. Together with AXS1, catalyzes the conversion of UDP-D-glucuronate into a mixture of UDP-D-apiose (UDP-Api) as the main product and UDP-D-xylose to a lesser extent, via a cycle of oxidation and reduction. D-Apiose (3-C-hydroxymethyl-d-erythrose) is the only plant cell wall monosaccharide with a branched carbon skeleton and is found in rhamnogalacturonan II (RG-II), apiogalacturonan, and several apioglycosides. The polypeptide is UDP-D-apiose/UDP-D-xylose synthase 2 (Arabidopsis thaliana (Mouse-ear cress)).